A 708-amino-acid chain; its full sequence is Assimilatory nitrate reductase (708 aa).

The 4Fe-4S Mo/W bis-MGD-type domain maps to 15–73 (TKQVPTTCMRCAVGCGHVHLGSENAYGLETVRGDPSHPVNNGLACGRGIRESADPAGEW). [4Fe-4S] cluster contacts are provided by Cys-22, Cys-25, Cys-29, and Cys-59. The disordered stretch occupies residues 586 to 613 (TTGREADGYNTGVRSRSDTPEEPVARVN).

Belongs to the prokaryotic molybdopterin-containing oxidoreductase family. NasA/NapA/NarB subfamily. Is probably a monomer. Initially characterized as a dimer of proteins with a MW of 105 and 50 kDa. [4Fe-4S] cluster is required as a cofactor. The cofactor is Mo-bis(molybdopterin guanine dinucleotide).

Its subcellular location is the cytoplasm. It catalyses the reaction nitrite + 2 oxidized [2Fe-2S]-[ferredoxin] + H2O = nitrate + 2 reduced [2Fe-2S]-[ferredoxin] + 2 H(+). It participates in nitrogen metabolism; nitrate reduction (assimilation). Inhibited by cyanide and azide. Its function is as follows. Nitrate reductase is a key enzyme involved in the first step of nitrate assimilation. Catalyzes the reduction of nitrate to nitrite, using ferredoxin as the electron donor. Can use reduced methyl viologen but neither NADPH nor NADH as electron donors. This is Assimilatory nitrate reductase from Haloferax mediterranei (strain ATCC 33500 / DSM 1411 / JCM 8866 / NBRC 14739 / NCIMB 2177 / R-4) (Halobacterium mediterranei).